Reading from the N-terminus, the 155-residue chain is Small ribosomal subunit protein uS7cz/uS7cy (155 aa).

This sequence belongs to the universal ribosomal protein uS7 family. As to quaternary structure, part of the 30S ribosomal subunit.

The protein localises to the plastid. It is found in the chloroplast. Functionally, one of the primary rRNA binding proteins, it binds directly to 16S rRNA where it nucleates assembly of the head domain of the 30S subunit. The chain is Small ribosomal subunit protein uS7cz/uS7cy (rps7-A) from Nymphaea alba (White water-lily).